The following is a 571-amino-acid chain: La-related protein 7 (571 aa).

Met1 carries the post-translational modification N-acetylmethionine. The span at 1–17 (METENQKTMEESTEKRK) shows a compositional bias: basic and acidic residues. Disordered regions lie at residues 1–25 (METE…KRSR) and 181–366 (LNNP…ERHK). Positions 23–117 (RSRVKQVLAD…KPLGERPKDE (95 aa)) constitute an HTH La-type RNA-binding domain. The region spanning 120-198 (RTVYVELLPK…PRKPGIFPKT (79 aa)) is the RRM domain. Over residues 214 to 223 (KKKKKKKGRI) the composition is skewed to basic residues. Residue Lys232 forms a Glycyl lysine isopeptide (Lys-Gly) (interchain with G-Cter in SUMO2) linkage. Phosphothreonine is present on Thr252. A phosphoserine mark is found at Ser254 and Ser257. Thr261 carries the phosphothreonine modification. Over residues 287 to 296 (KAGKRERSSA) the composition is skewed to basic and acidic residues. Residues Ser294, Ser295, and Ser335 each carry the phosphoserine modification. Thr336 carries the post-translational modification Phosphothreonine. Residues 342–351 (PGDRKGDSLS) are compositionally biased toward basic and acidic residues. Ser349 carries the phosphoserine modification. Residues 352–365 (KGKRKHKKKHKERH) show a composition bias toward basic residues. Lys408 participates in a covalent cross-link: Glycyl lysine isopeptide (Lys-Gly) (interchain with G-Cter in SUMO2). Residues 411-432 (SEMETESKAPPGSGQQCSTQEK) are disordered. Polar residues predominate over residues 423 to 432 (SGQQCSTQEK). The xRRM domain maps to 439–552 (QFVTGVIVKI…TEKLITKAEK (114 aa)).

The protein belongs to the LARP7 family. In terms of assembly, core component of the 7SK RNP complex, at least composed of 7SK RNA, LARP7, MEPCE, HEXIM1 (or HEXIM2) and P-TEFb (composed of CDK9 and CCNT1/cyclin-T1). Interacts with METTL16. Interacts with RBM7; upon genotoxic stress this interaction is enhanced, triggering the release of inactive P-TEFb complex from the core, yielding to P-TEFb complex activation. Associates with box C/D small nucleolar ribonucleoprotein (snoRNP) complexes.

It localises to the nucleus. Its subcellular location is the nucleoplasm. Its function is as follows. RNA-binding protein that specifically binds distinct small nuclear RNA (snRNAs) and regulates their processing and function. Specifically binds the 7SK snRNA (7SK RNA) and acts as a core component of the 7SK ribonucleoprotein (RNP) complex, thereby acting as a negative regulator of transcription elongation by RNA polymerase II. The 7SK RNP complex sequesters the positive transcription elongation factor b (P-TEFb) in a large inactive 7SK RNP complex preventing RNA polymerase II phosphorylation and subsequent transcriptional elongation. The 7SK RNP complex also promotes snRNA gene transcription by RNA polymerase II via interaction with the little elongation complex (LEC). LARP7 specifically binds to the highly conserved 3'-terminal U-rich stretch of 7SK RNA; on stimulation, remains associated with 7SK RNA, whereas P-TEFb is released from the complex. LARP7 also acts as a regulator of mRNA splicing fidelity by promoting U6 snRNA processing. Specifically binds U6 snRNAs and associates with a subset of box C/D RNP complexes: promotes U6 snRNA 2'-O-methylation by facilitating U6 snRNA loading into box C/D RNP complexes. U6 snRNA 2'-O-methylation is required for mRNA splicing fidelity. Binds U6 snRNAs with a 5'-CAGGG-3' sequence motif. U6 snRNA processing is required for spermatogenesis. The chain is La-related protein 7 from Rattus norvegicus (Rat).